The chain runs to 106 residues: Immunoglobulin lambda constant 3 (106 aa).

The Ig-like domain maps to 7–101 (PSVTLFPPSS…EGSTVEKTVA (95 aa)). A disulfide bridge links Cys28 with Cys87.

In terms of assembly, immunoglobulins are composed of two identical heavy chains and two identical light chains; disulfide-linked.

It localises to the secreted. Its subcellular location is the cell membrane. Functionally, constant region of immunoglobulin light chains. Immunoglobulins, also known as antibodies, are membrane-bound or secreted glycoproteins produced by B lymphocytes. In the recognition phase of humoral immunity, the membrane-bound immunoglobulins serve as receptors which, upon binding of a specific antigen, trigger the clonal expansion and differentiation of B lymphocytes into immunoglobulins-secreting plasma cells. Secreted immunoglobulins mediate the effector phase of humoral immunity, which results in the elimination of bound antigens. The antigen binding site is formed by the variable domain of one heavy chain, together with that of its associated light chain. Thus, each immunoglobulin has two antigen binding sites with remarkable affinity for a particular antigen. The variable domains are assembled by a process called V-(D)-J rearrangement and can then be subjected to somatic hypermutations which, after exposure to antigen and selection, allow affinity maturation for a particular antigen. This chain is Immunoglobulin lambda constant 3, found in Homo sapiens (Human).